The primary structure comprises 627 residues: Neutral endopeptidase (627 aa).

The region spanning 1-627 is the Peptidase M13 domain; that stretch reads MTRIQDDLFA…RAPENRLKIW (627 aa). His-475 lines the Zn(2+) pocket. The active site involves Glu-476. 2 residues coordinate Zn(2+): His-479 and Glu-535. Asp-539 (proton donor) is an active-site residue.

The protein belongs to the peptidase M13 family. Monomer. Zn(2+) is required as a cofactor.

Its function is as follows. Endopeptidase with broad substrate specificity for several oligopeptides. This chain is Neutral endopeptidase (pepO), found in Lactococcus lactis subsp. lactis (strain IL1403) (Streptococcus lactis).